We begin with the raw amino-acid sequence, 704 residues long: MAANAPIEKIRNIGISAHIDSGKTTLSERILFYTGRIHEIHEVRGKDGVGAIMDNMDLEREKGITIQSAATFAMWGEYNINLIDTPGHVDFTIEVERSLRVLDGAILVLCSVAGVQSQSITVDRQMKRYRVPRIAFVNKMDRSGANYDRVAAQLKEKLNHHPVQMQMPIGAEDRLKGLINLIEMKAYYFDGESGEDIREEEIPAELLEEAKTRRQQMIEGVAEVDDQLGELFLADQPISNEALIAAVRRATIGLKMTPVMCGSAYKNKGVQLLLNAVCAFLPNPKEATNEALDQKNNEAKVILDSDPEKPFVGLAFKLEDGRYGQLTYMRIYQGRVTKGDFIINQSNQKKVKVPRIVRMHSSQMNDINEATAGDIVALFGIECASGDTFTDGVVNYTMTSMHVPDAVISLAVAPKDRSNLTNFSKALNRFTKEDPTFRVHRDEESGQTIIRGMGELHLEIYIERMKREYNCEVQAGKPQVAYRETISQKGEFAYTHKKQTGGSGQFARVCGYIEPLPSDAVQQYEFVDDIVGGSIPREFIPACDKGFTEAVKKGSLIGFPVVGVRVVINDGAFHAVDSSEMAFKTAAIMGFREGYAAAKPIILEPMMKVEVQAPEDFQGSVVGQLNQRRGTILSTETAEGYVTAVAEVPLNTMFGYSTDLRSATQGKGEYTMEFSRYTPVPRNESEALMAAYKEKLAAEQAARK.

The 278-residue stretch at 8-285 (EKIRNIGISA…AVCAFLPNPK (278 aa)) folds into the tr-type G domain. GTP-binding positions include 17-24 (AHIDSGKT), 84-88 (DTPGH), and 138-141 (NKMD).

It belongs to the TRAFAC class translation factor GTPase superfamily. Classic translation factor GTPase family. EF-G/EF-2 subfamily.

It is found in the cytoplasm. In terms of biological role, catalyzes the GTP-dependent ribosomal translocation step during translation elongation. During this step, the ribosome changes from the pre-translocational (PRE) to the post-translocational (POST) state as the newly formed A-site-bound peptidyl-tRNA and P-site-bound deacylated tRNA move to the P and E sites, respectively. Catalyzes the coordinated movement of the two tRNA molecules, the mRNA and conformational changes in the ribosome. This chain is Elongation factor G 1, found in Myxococcus xanthus (strain DK1622).